The chain runs to 228 residues: Ribosomal RNA large subunit methyltransferase E (228 aa).

S-adenosyl-L-methionine contacts are provided by G76, W78, D99, D115, and D139. Catalysis depends on K179, which acts as the Proton acceptor.

The protein belongs to the class I-like SAM-binding methyltransferase superfamily. RNA methyltransferase RlmE family.

It localises to the cytoplasm. It catalyses the reaction uridine(2552) in 23S rRNA + S-adenosyl-L-methionine = 2'-O-methyluridine(2552) in 23S rRNA + S-adenosyl-L-homocysteine + H(+). Its function is as follows. Specifically methylates the uridine in position 2552 of 23S rRNA at the 2'-O position of the ribose in the fully assembled 50S ribosomal subunit. The sequence is that of Ribosomal RNA large subunit methyltransferase E from Bradyrhizobium diazoefficiens (strain JCM 10833 / BCRC 13528 / IAM 13628 / NBRC 14792 / USDA 110).